A 210-amino-acid polypeptide reads, in one-letter code: Putative 3-methyladenine DNA glycosylase (210 aa).

It belongs to the DNA glycosylase MPG family.

This chain is Putative 3-methyladenine DNA glycosylase, found in Lactobacillus acidophilus (strain ATCC 700396 / NCK56 / N2 / NCFM).